The chain runs to 66 residues: Large ribosomal subunit protein bL35 (66 aa).

The span at 1-16 shows a compositional bias: basic residues; sequence MPKMKTHRGAAKRVKR. Residues 1–28 form a disordered region; it reads MPKMKTHRGAAKRVKRTGSGQLKRSRAF.

Belongs to the bacterial ribosomal protein bL35 family.

This Staphylococcus epidermidis (strain ATCC 35984 / DSM 28319 / BCRC 17069 / CCUG 31568 / BM 3577 / RP62A) protein is Large ribosomal subunit protein bL35.